The sequence spans 535 residues: Sodium/hydrogen exchanger 9B2 (535 aa).

The span at 1–14 shows a compositional bias: basic and acidic residues; the sequence is MRNQDKRAAHKDSE. Positions 1 to 70 are disordered; it reads MRNQDKRAAH…TPAEPNHLQR (70 aa). The Cytoplasmic portion of the chain corresponds to 1-85; that stretch reads MRNQDKRAAH…ACPPRGLLAR (85 aa). Polar residues-rich tracts occupy residues 16–34 and 46–58; these read STEV…QETG and TEGS…NEKM. Residues 86–103 traverse the membrane as a helical segment; sequence VITNVTMVILLWAVVWSV. Topologically, residues 104 to 112 are extracellular; that stretch reads TGSECLPGG. A helical membrane pass occupies residues 113 to 132; that stretch reads NLFGIIMLFYCAIIGGKLFG. Residues 133 to 143 are Cytoplasmic-facing; it reads LIKLPTLPPLP. Residues 144–160 traverse the membrane as a helical segment; sequence PLLGMLLAGFLIRNVPV. Residues 161–170 are Extracellular-facing; the sequence is ISDNIQIKHK. A helical transmembrane segment spans residues 171–188; sequence WSSALRSIALSVILVRAG. The Cytoplasmic segment spans residues 189-199; the sequence is LGLDSNALKKL. A helical transmembrane segment spans residues 200–226; sequence KGVCVRLSLGPCLIEACTSAVLAYFLM. The Extracellular portion of the chain corresponds to 227-232; sequence GLPWQW. The helical transmembrane segment at 233–241 threads the bilayer; sequence GFMLGFVLG. Residues 242–269 are Cytoplasmic-facing; sequence AVSPAVVVPSMLLLQEGGYGVEKGIPTL. The Na(+) site is built by valine 243, glycine 274, aspartate 277, and aspartate 278. A helical membrane pass occupies residues 270–289; that stretch reads LMAAGSFDDILAITGFNTCL. At 290 to 299 the chain is on the extracellular side; sequence GMAFSTGSTV. A helical transmembrane segment spans residues 300–323; the sequence is FNVLKGVLEVIIGVVTGLVLGFFI. Residues 324–338 lie on the Cytoplasmic side of the membrane; it reads QYFPSSDQDNLVWKR. A helical transmembrane segment spans residues 339–356; the sequence is AFLVLGLSVLAVFSSTYF. Over 357 to 360 the chain is Extracellular; the sequence is GFPG. Residues 361–372 form a helical membrane-spanning segment; sequence SGGLCTLVTAFL. The Cytoplasmic portion of the chain corresponds to 373 to 389; sequence AGRGWASTKTDVEKVIA. A helical transmembrane segment spans residues 390-410; the sequence is VAWDIFQPLLFGLIGAEVLIT. Over 411–416 the chain is Extracellular; the sequence is ALRPET. A helical transmembrane segment spans residues 417–439; sequence IGLCVATLGIAVLIRILVTYLMV. Over 440-460 the chain is Cytoplasmic; that stretch reads CFAGFNIKEKIFISFAWLPKA. Residues 461–472 traverse the membrane as a helical segment; it reads TVQAAIGSVALD. Residues 473–485 lie on the Extracellular side of the membrane; the sequence is TARSHGEKQLEGY. Residues 486–508 form a helical membrane-spanning segment; the sequence is GMDVLTVAFLSIIITAPVGSLLI. The Cytoplasmic segment spans residues 509–535; that stretch reads GLLGPRLLQKAEQNKDEEDQGETSIQV.

Belongs to the monovalent cation:proton antiporter 1 (CPA1) transporter (TC 2.A.36) family. As to quaternary structure, homodimer; dimerization is essential for SLC9B2 activity. Lipids seem to play a role in the stabilization of the dimerization subdomain.

It is found in the cell membrane. The protein resides in the mitochondrion membrane. The protein localises to the endosome membrane. Its subcellular location is the recycling endosome membrane. It localises to the lysosome membrane. It is found in the cytoplasmic vesicle. The protein resides in the secretory vesicle. The protein localises to the synaptic vesicle membrane. Its subcellular location is the cell projection. It localises to the cilium. It is found in the flagellum membrane. The protein resides in the basolateral cell membrane. The protein localises to the apical cell membrane. It carries out the reaction Li(+)(out) + H(+)(in) = Li(+)(in) + H(+)(out). It catalyses the reaction Li(+)(in) + Na(+)(out) = Li(+)(out) + Na(+)(in). The catalysed reaction is Na(+)(in) + H(+)(out) = Na(+)(out) + H(+)(in). Allosterically inhibited by the N-terminal domain. Inhibited by phloretin. Its function is as follows. Electroneutral Na(+) Li(+)/H(+) antiporter that extrudes Na(+) or Li(+) in exchange for external protons across the membrane. Uses the proton gradient/membrane potential to extrude sodium. Contributes to the regulation of intracellular pH and sodium homeostasis. Also able to mediate Na(+)/Li(+) antiporter activity in kidney. May play a physiological role in renal tubular function and blood pressure homeostasis. Plays an important role for insulin secretion and clathrin-mediated endocytosis in beta-cells. Involved in sperm motility and fertility. It is controversial whether SLC9B2 plays a role in osteoclast differentiation or not. In Bison bison bison (North American plains bison), this protein is Sodium/hydrogen exchanger 9B2 (SLC9B2).